Here is a 99-residue protein sequence, read N- to C-terminus: Large ribosomal subunit protein uL23 (99 aa).

It belongs to the universal ribosomal protein uL23 family. In terms of assembly, part of the 50S ribosomal subunit. Contacts protein L29, and trigger factor when it is bound to the ribosome.

Functionally, one of the early assembly proteins it binds 23S rRNA. One of the proteins that surrounds the polypeptide exit tunnel on the outside of the ribosome. Forms the main docking site for trigger factor binding to the ribosome. The chain is Large ribosomal subunit protein uL23 from Synechococcus sp. (strain JA-2-3B'a(2-13)) (Cyanobacteria bacterium Yellowstone B-Prime).